Reading from the N-terminus, the 161-residue chain is Globin CTT-VIIB-10 (161 aa).

The signal sequence occupies residues 1 to 16 (MKFFAVLALCIVGAIA). The Globin domain maps to 18–161 (PLTADEASLV…NTFAIVVPRL (144 aa)). Histidine 76 and histidine 111 together coordinate heme b.

The protein belongs to the globin family. In terms of assembly, homodimer.

The chain is Globin CTT-VIIB-10 (CTT-7B10) from Chironomus thummi thummi (Midge).